We begin with the raw amino-acid sequence, 473 residues long: Putative F-box/LRR-repeat protein At3g59170 (473 aa).

The F-box domain occupies 6 to 54; that stretch reads KDMINVLPDALLCHILSFLTTKEAASTSLLSRRWRYLLAFVPNLEFDDS. LRR repeat units follow at residues 168–194, 196–221, 229–254, 333–364, and 365–390; these read TIKI…YLQS, MFDE…VLDG, SFTV…GYMH, VLYL…TIKS, and DPNV…VFQG.

This is Putative F-box/LRR-repeat protein At3g59170 from Arabidopsis thaliana (Mouse-ear cress).